The sequence spans 359 residues: Gene 58 protein (359 aa).

The next 11 helical transmembrane spans lie at 12–32 (TMAA…CFLF), 45–65 (VDEL…FFCF), 75–95 (YLDL…ICLQ), 103–123 (YLPI…PVTF), 132–152 (YANA…YLLL), 154–174 (FGSV…IAGL), 220–240 (LCVV…AGVY), 246–266 (VLKT…GMGY), 271–289 (ATFV…VFVL), 296–318 (SVLF…TIML), and 330–350 (IVLS…NVLY).

This sequence belongs to the herpesviridae BMRF2 family.

Its subcellular location is the host membrane. The polypeptide is Gene 58 protein (58) (Equine herpesvirus 2 (strain 86/87) (EHV-2)).